The primary structure comprises 466 residues: UDP-N-acetylmuramoylalanine--D-glutamate ligase (466 aa).

An ATP-binding site is contributed by 127–133 (GSNGKST).

The protein belongs to the MurCDEF family.

The protein localises to the cytoplasm. The catalysed reaction is UDP-N-acetyl-alpha-D-muramoyl-L-alanine + D-glutamate + ATP = UDP-N-acetyl-alpha-D-muramoyl-L-alanyl-D-glutamate + ADP + phosphate + H(+). The protein operates within cell wall biogenesis; peptidoglycan biosynthesis. Cell wall formation. Catalyzes the addition of glutamate to the nucleotide precursor UDP-N-acetylmuramoyl-L-alanine (UMA). This is UDP-N-acetylmuramoylalanine--D-glutamate ligase from Ruegeria pomeroyi (strain ATCC 700808 / DSM 15171 / DSS-3) (Silicibacter pomeroyi).